Here is a 282-residue protein sequence, read N- to C-terminus: Thiazole synthase (282 aa).

The active-site Schiff-base intermediate with DXP is lysine 113. 1-deoxy-D-xylulose 5-phosphate contacts are provided by residues glycine 174, 201 to 202 (AG), and 223 to 224 (NT).

The protein belongs to the ThiG family. Homotetramer. Forms heterodimers with either ThiH or ThiS.

It localises to the cytoplasm. It carries out the reaction [ThiS sulfur-carrier protein]-C-terminal-Gly-aminoethanethioate + 2-iminoacetate + 1-deoxy-D-xylulose 5-phosphate = [ThiS sulfur-carrier protein]-C-terminal Gly-Gly + 2-[(2R,5Z)-2-carboxy-4-methylthiazol-5(2H)-ylidene]ethyl phosphate + 2 H2O + H(+). Its pathway is cofactor biosynthesis; thiamine diphosphate biosynthesis. Catalyzes the rearrangement of 1-deoxy-D-xylulose 5-phosphate (DXP) to produce the thiazole phosphate moiety of thiamine. Sulfur is provided by the thiocarboxylate moiety of the carrier protein ThiS. In vitro, sulfur can be provided by H(2)S. The sequence is that of Thiazole synthase from Cupriavidus metallidurans (strain ATCC 43123 / DSM 2839 / NBRC 102507 / CH34) (Ralstonia metallidurans).